Reading from the N-terminus, the 227-residue chain is DNA repair protein RecO (227 aa).

This sequence belongs to the RecO family.

Involved in DNA repair and RecF pathway recombination. This chain is DNA repair protein RecO, found in Pseudomonas syringae pv. syringae (strain B728a).